The following is a 267-amino-acid chain: Transcription factor HES-1-A (267 aa).

Residues 1-43 form a disordered region; the sequence is MPADVMEKNSSSPVAATPASVSNTPDKPKTASEHRKSSKPIME. Over residues 10–22 the composition is skewed to low complexity; sequence SSSPVAATPASVS. Residues 26-35 are compositionally biased toward basic and acidic residues; the sequence is DKPKTASEHR. The 58-residue stretch at 34 to 91 folds into the bHLH domain; that stretch reads HRKSSKPIMEKRRRARINESLGQLKTLILDALKKDSSRHSKLEKADILEMTVKHLRNL. One can recognise an Orange domain in the interval 110 to 143; the sequence is YRAGFSECMNEVTRFLSTCEGVNTDVRTRLLGHL. Residues 264–267 carry the WRPW motif motif; it reads WRPW.

Transcription repression requires formation of a complex with a corepressor protein of the Groucho/TLE family. Interacts with the bHLH protein hes2, and binds DNA in the form of a heterodimer with the bHLH protein hey1/hrt1. Interacts with the bHLH protein hes6; this interaction may inhibit the transcriptional repressor activity. In terms of tissue distribution, starting from late neurula stage, weakly expressed in midline neural cells, where expression is restricted to the superficial layer of the prospective floorplate. Expressed in the posterior somitic mesoderm (PSM) at tailbud stage. During early tailbud stages, broadly expressed within the pronephric mesoderm both around and inside the developing pronephros. During late tailbud to early tadpole stages, expressed more ventrally in the pronephros, and although initially expressed in both the lateral and medial layers, by these later stages expression is predominantly in the lateral layer. Pronephric expression is no longer detectable in late tadpoles (stage 35).

Its subcellular location is the nucleus. Its function is as follows. Transcriptional repressor of a subset of early mesodermal genes including myod1 and t/bra. Binds DNA on N-box motifs: 5'-CACNAG-3'. Acts as a negative regulator of myogenesis, mediating Notch signaling to repress expression of myod1. The polypeptide is Transcription factor HES-1-A (hes1-a) (Xenopus laevis (African clawed frog)).